Consider the following 228-residue polypeptide: Probable U3 small nucleolar RNA-associated protein 11 (228 aa).

2 disordered regions span residues 1–23 and 192–211; these read MSSLRNAIPRPAHKERSQPEARK and SMQKELQKKGRKRKLRDDEL. The segment covering 12 to 23 has biased composition (basic and acidic residues); sequence AHKERSQPEARK.

The protein belongs to the UTP11 family. As to quaternary structure, component of the ribosomal small subunit (SSU) processome.

Its subcellular location is the nucleus. It localises to the nucleolus. Functionally, involved in nucleolar processing of pre-18S ribosomal RNA. In Arabidopsis thaliana (Mouse-ear cress), this protein is Probable U3 small nucleolar RNA-associated protein 11.